The chain runs to 345 residues: NADPH dehydrogenase (345 aa).

23 to 26 (SPMC) lines the FMN pocket. Tyr28 lines the substrate pocket. Positions 60 and 102 each coordinate FMN. A substrate-binding site is contributed by 164–167 (HGAH). FMN contacts are provided by residues Arg215 and 307–308 (GR).

This sequence belongs to the NADH:flavin oxidoreductase/NADH oxidase family. NamA subfamily. As to quaternary structure, homotetramer. It depends on FMN as a cofactor.

The catalysed reaction is A + NADPH + H(+) = AH2 + NADP(+). In terms of biological role, catalyzes the reduction of the double bond of an array of alpha,beta-unsaturated aldehydes and ketones. It also reduces the nitro group of nitroester and nitroaromatic compounds. It could have a role in detoxification processes. In Bacillus cereus (strain AH820), this protein is NADPH dehydrogenase.